A 468-amino-acid polypeptide reads, in one-letter code: MDASAIKLTPKDIVSQLNEYIVGQNDAKKKVAIALRNRYRRSQLDEEMKQEIVPKNILMIGPTGVGKTEIARRMAKIVGAPFIKVEATKFTEVGYVGRDVESMVRDLVDVAVRLVKEDRKDKVKDEAVKKANDKLVKLLVPSMKKKANQNAGNPFESIFGGMMPNFGNNDEEDEEPPTEDIKTKRSEIRSQLLNGQLEEEKVRIKVEQDPGALGMLGTNQNQQVQDMMNQLMPKKKVEREVPVKTARKILADEYADELIDHETANQEALELAEQMGIIFIDEIDKVASNNQGGGQDVSRQGVQRDILPIVEGSVVQTKYGSVNTEHMLFIGAGAFHVSKPSDLIPELQGRFPIRVELDSLSVDDFVNILKEPKLSLIKQYEALLQTEEVTVNFTDEAITRLAEIAYQVNQDTDNIGARRLHTILEKMLEDLSYEAPGMPNAVVDITAQYVDDKLKSISTNKDLSAFIL.

Residues Val-22 and 64 to 69 (GVGKTE) contribute to the ATP site. A disordered region spans residues 166–187 (FGNNDEEDEEPPTEDIKTKRSE). The span at 169-178 (NDEEDEEPPT) shows a compositional bias: acidic residues. Positions 281, 346, and 418 each coordinate ATP.

This sequence belongs to the ClpX chaperone family. HslU subfamily. In terms of assembly, a double ring-shaped homohexamer of HslV is capped on each side by a ring-shaped HslU homohexamer. The assembly of the HslU/HslV complex is dependent on binding of ATP.

Its subcellular location is the cytoplasm. In terms of biological role, ATPase subunit of a proteasome-like degradation complex; this subunit has chaperone activity. The binding of ATP and its subsequent hydrolysis by HslU are essential for unfolding of protein substrates subsequently hydrolyzed by HslV. HslU recognizes the N-terminal part of its protein substrates and unfolds these before they are guided to HslV for hydrolysis. The sequence is that of ATP-dependent protease ATPase subunit HslU from Staphylococcus carnosus (strain TM300).